Here is a 548-residue protein sequence, read N- to C-terminus: MNGAQWVVHALRAQGVNTVFGYPGGAIMPVYDALYDGGVEHLLCRHEQGAAMAAIGYARATGKTGVCIATSGPGATNLITGLADALLDSIPVVAITGQVSAPFIGTDAFQEVDVLGLSLACTKHSFLVQSLEELPRIMAEAFDVACSGRPGPVLVDIPKDIQLASGDLEPWFTTVENEVTFPHAEVEQARQMLAKAQKPMLYVGGGVGMAQAVPALREFLAATKMPATCTLKGLGAVEADYPYYLGMLGMHGTKAANFAVQECDLLIAVGARFDDRVTGKLNTFAPHASVIHMDIDPAEMNKLRQAHVALQGDLNALLPALQQPLNQYDWQQHCAQLRDEHSWRYDHPGDAIYAPLLLKQLSDRKPADCVVTTDVGQHQMWAAQHIAHTRPENFITSSGLGTMGFGLPAAVGAQVARPNDTVVCISGDGSFMMNVQELGTVKRKQLPLKIVLLDNQRLGMVRQWQQLFFQERYSETTLTDNPDFLMLASAFGIHGQHITRKDQVEAALDTMLNSDGPYLLHVSIDELENVWPLVPPGASNSEMLEKLS.

A thiamine diphosphate-binding site is contributed by Glu47. FAD-binding positions include Arg149, 251–272, and 294–313; these read HGTKAANFAVQECDLLIAVGAR and DIDPAEMNKLRQAHVALQGD. The interval 377-457 is thiamine pyrophosphate binding; it reads QHQMWAAQHI…LKIVLLDNQR (81 aa). Residues Asp428 and Asn455 each coordinate Mg(2+).

It belongs to the TPP enzyme family. As to quaternary structure, tetramer of two large (IlvG) and two small (IlvM) chains. It depends on FAD as a cofactor. Mg(2+) serves as cofactor. The cofactor is thiamine diphosphate.

It carries out the reaction 2 pyruvate + H(+) = (2S)-2-acetolactate + CO2. The protein operates within amino-acid biosynthesis; L-isoleucine biosynthesis; L-isoleucine from 2-oxobutanoate: step 1/4. It participates in amino-acid biosynthesis; L-valine biosynthesis; L-valine from pyruvate: step 1/4. With respect to regulation, inhibited by the herbicides chlorimuron ethyl, chlorsulfuron and imazapyr. In terms of biological role, catalyzes the first step in the biosynthesis of branched-chain amino acids. The chain is Acetolactate synthase isozyme 2 large subunit (ilvG) from Escherichia coli (strain K12).